We begin with the raw amino-acid sequence, 264 residues long: S-adenosylmethionine decarboxylase proenzyme (264 aa).

The active-site Schiff-base intermediate with substrate; via pyruvic acid is the S113. At S113 the chain carries Pyruvic acid (Ser); by autocatalysis. The active-site Proton acceptor; for processing activity is the H118. Catalysis depends on C141, which acts as the Proton donor; for catalytic activity.

The protein belongs to the prokaryotic AdoMetDC family. Type 2 subfamily. In terms of assembly, heterooctamer of four alpha and four beta chains arranged as a tetramer of alpha/beta heterodimers. Pyruvate is required as a cofactor. Post-translationally, is synthesized initially as an inactive proenzyme. Formation of the active enzyme involves a self-maturation process in which the active site pyruvoyl group is generated from an internal serine residue via an autocatalytic post-translational modification. Two non-identical subunits are generated from the proenzyme in this reaction, and the pyruvate is formed at the N-terminus of the alpha chain, which is derived from the carboxyl end of the proenzyme. The post-translation cleavage follows an unusual pathway, termed non-hydrolytic serinolysis, in which the side chain hydroxyl group of the serine supplies its oxygen atom to form the C-terminus of the beta chain, while the remainder of the serine residue undergoes an oxidative deamination to produce ammonia and the pyruvoyl group blocking the N-terminus of the alpha chain.

The catalysed reaction is S-adenosyl-L-methionine + H(+) = S-adenosyl 3-(methylsulfanyl)propylamine + CO2. It functions in the pathway amine and polyamine biosynthesis; S-adenosylmethioninamine biosynthesis; S-adenosylmethioninamine from S-adenosyl-L-methionine: step 1/1. Catalyzes the decarboxylation of S-adenosylmethionine to S-adenosylmethioninamine (dcAdoMet), the propylamine donor required for the synthesis of the polyamines spermine and spermidine from the diamine putrescine. This Stenotrophomonas maltophilia (strain K279a) protein is S-adenosylmethionine decarboxylase proenzyme.